The primary structure comprises 303 residues: L(+)-tartrate dehydratase subunit alpha (303 aa).

Iron-sulfur cluster is bound by residues Cys71, Cys190, and Cys277.

Belongs to the class-I fumarase family. Tetramer of two alpha and two beta subunits. Requires iron-sulfur cluster as cofactor.

The enzyme catalyses (2R,3R)-tartrate = oxaloacetate + H2O. The chain is L(+)-tartrate dehydratase subunit alpha (ttdA) from Escherichia coli O6:K15:H31 (strain 536 / UPEC).